A 378-amino-acid polypeptide reads, in one-letter code: Histidine decarboxylase (378 aa).

Residue His-120 participates in substrate binding. At Lys-233 the chain carries N6-(pyridoxal phosphate)lysine.

The protein belongs to the group II decarboxylase family. In terms of assembly, homotetramer. The cofactor is pyridoxal 5'-phosphate.

It catalyses the reaction L-histidine + H(+) = histamine + CO2. The protein is Histidine decarboxylase (hdc) of Klebsiella aerogenes (Enterobacter aerogenes).